Reading from the N-terminus, the 349-residue chain is Small ribosomal subunit protein eS6 (349 aa).

The segment at 224–349 (RRRSRLSSMR…AKKEKKQKKK (126 aa)) is disordered. Composition is skewed to basic and acidic residues over residues 231–251 (SMRDSRSSIGEERDKEKEKAA) and 260–334 (KKEA…EAAK).

The protein belongs to the eukaryotic ribosomal protein eS6 family. Component of the small ribosomal subunit. Part of the small subunit (SSU) processome, composed of more than 70 proteins and the RNA chaperone small nucleolar RNA (snoRNA) U3. Post-translationally, ribosomal protein S6 is the major substrate of protein kinases in eukaryote ribosomes.

It localises to the cytoplasm. The protein resides in the nucleus. The protein localises to the nucleolus. Component of the 40S small ribosomal subunit. Plays an important role in controlling cell growth and proliferation through the selective translation of particular classes of mRNA. Part of the small subunit (SSU) processome, first precursor of the small eukaryotic ribosomal subunit. During the assembly of the SSU processome in the nucleolus, many ribosome biogenesis factors, an RNA chaperone and ribosomal proteins associate with the nascent pre-rRNA and work in concert to generate RNA folding, modifications, rearrangements and cleavage as well as targeted degradation of pre-ribosomal RNA by the RNA exosome. This is Small ribosomal subunit protein eS6 (RpS6) from Aedes albopictus (Asian tiger mosquito).